The following is a 251-amino-acid chain: Probable metal-binding protein YrpE (251 aa).

A signal peptide spans 1–30 (MNILFSKRLGILTIGSLLVLAGCQTSGSSA). Polar residues predominate over residues 25-41 (TSGSSAGESNQTTSSSA). The disordered stretch occupies residues 25–72 (TSGSSAGESNQTTSSSAVEEDSSKTQEQTSDSHTHEHSHDHSHAHDEE). The segment covering 54 to 72 (SDSHTHEHSHDHSHAHDEE) has biased composition (basic and acidic residues). The Zn(2+) site is built by H203, H212, H214, E247, and H251.

It belongs to the calycin superfamily. ZinT family.

In Bacillus subtilis (strain 168), this protein is Probable metal-binding protein YrpE (yrpE).